The following is an 800-amino-acid chain: Phenylalanine--tRNA ligase beta subunit (800 aa).

Residues 39–148 form the tRNA-binding domain; it reads TAALAPFVVG…ADTPVGVPLV (110 aa). The B5 domain maps to 402–478; that stretch reads VWRRTIALRP…RLHGFDLVPA (77 aa). The Mg(2+) site is built by Asp456, Asp462, Glu465, and Glu466. The FDX-ACB domain maps to 706 to 799; it reads SPFQPVARDF…VTKLTGGSLR (94 aa).

It belongs to the phenylalanyl-tRNA synthetase beta subunit family. Type 1 subfamily. Tetramer of two alpha and two beta subunits. Requires Mg(2+) as cofactor.

It is found in the cytoplasm. It catalyses the reaction tRNA(Phe) + L-phenylalanine + ATP = L-phenylalanyl-tRNA(Phe) + AMP + diphosphate + H(+). This is Phenylalanine--tRNA ligase beta subunit from Rhodospirillum rubrum (strain ATCC 11170 / ATH 1.1.1 / DSM 467 / LMG 4362 / NCIMB 8255 / S1).